We begin with the raw amino-acid sequence, 112 residues long: Protein lin-52 homolog (112 aa).

The protein belongs to the lin-52 family. Component of the DREAM complex. As to expression, expressed in the brain, liver and retina. Highly expressed in the retinal ganglion cell and inner nuclear layers at the parr stage. Expressed at a lower level in inner segments of some retinal photoreceptors.

Its function is as follows. May be involved in retinal development. This chain is Protein lin-52 homolog (lin52), found in Oncorhynchus mykiss (Rainbow trout).